The chain runs to 763 residues: Long-chain-fatty-acid--CoA ligase ACSBG2 (763 aa).

A disordered region spans residues 47-78; it reads CSMKPADDPKTERSQMNKTGLASSSRPASNVW. A compositionally biased stretch (basic and acidic residues) spans 51-61; sequence PADDPKTERSQ. Residues 62–78 are compositionally biased toward polar residues; sequence MNKTGLASSSRPASNVW. ATP contacts are provided by residues 281–289, 472–477, Asp-550, Arg-565, and Lys-678; these read TSGTTGQPK and ELYGMS.

Belongs to the ATP-dependent AMP-binding enzyme family. Bubblegum subfamily.

It is found in the cytoplasm. It catalyses the reaction a long-chain fatty acid + ATP + CoA = a long-chain fatty acyl-CoA + AMP + diphosphate. The enzyme catalyses (5Z,8Z,11Z,14Z)-eicosatetraenoate + ATP + CoA = (5Z,8Z,11Z,14Z)-eicosatetraenoyl-CoA + AMP + diphosphate. It carries out the reaction hexadecanoate + ATP + CoA = hexadecanoyl-CoA + AMP + diphosphate. The catalysed reaction is (9Z)-octadecenoate + ATP + CoA = (9Z)-octadecenoyl-CoA + AMP + diphosphate. It catalyses the reaction (9Z,12Z)-octadecadienoate + ATP + CoA = (9Z,12Z)-octadecadienoyl-CoA + AMP + diphosphate. The enzyme catalyses tetracosanoate + ATP + CoA = tetracosanoyl-CoA + AMP + diphosphate. Mediates activation of long-chain fatty acids for both synthesis of cellular lipids, and degradation via beta-oxidation. Its function is as follows. Catalyzes the conversion of fatty acids such as long chain and very long-chain fatty acids to their active form acyl-CoAs for both synthesis of cellular lipids, and degradation via beta-oxidation. Can activate diverse saturated, monosaturated and polyunsaturated fatty acids. This chain is Long-chain-fatty-acid--CoA ligase ACSBG2, found in Gallus gallus (Chicken).